We begin with the raw amino-acid sequence, 208 residues long: Histone H1.3 (208 aa).

At serine 2 the chain carries N-acetylserine. Positions 37-113 (AHPPYINMVT…GASGRFRVTE (77 aa)) constitute an H15 domain. The tract at residues 113 to 208 (EKKAAAAKKP…PAKKAVAPKT (96 aa)) is disordered. 2 stretches are compositionally biased toward basic residues: residues 148–158 (KAKKTTATKTK) and 165–191 (KKVKSPKKIAKPTAKKVAKSPAKKSAP). The segment covering 192–208 (KKAAAAKPAKKAVAPKT) has biased composition (low complexity).

Belongs to the histone H1/H5 family.

The protein localises to the nucleus. It is found in the chromosome. Its function is as follows. Histones H1 are necessary for the condensation of nucleosome chains into higher-order structures. In Caenorhabditis elegans, this protein is Histone H1.3 (hil-3).